The following is an 81-amino-acid chain: Large ribosomal subunit protein uL24 (81 aa).

It belongs to the universal ribosomal protein uL24 family. As to quaternary structure, part of the 50S ribosomal subunit.

Its function is as follows. One of two assembly initiator proteins, it binds directly to the 5'-end of the 23S rRNA, where it nucleates assembly of the 50S subunit. Functionally, one of the proteins that surrounds the polypeptide exit tunnel on the outside of the subunit. This chain is Large ribosomal subunit protein uL24, found in Chloroherpeton thalassium (strain ATCC 35110 / GB-78).